Here is a 372-residue protein sequence, read N- to C-terminus: MQARRLMMSNTMNYMKAATACIDLVALQHNLQLIKQQAPHSKLMAVVKANGYGHGLRHVAKHAVGADAFGVARIEEALQLRACGVVKPILLLEGFYSSGDLPVLVTNNIQTVVHCEEQLRDLENAELETPVVVWLKIDSGMHRLGVRPEQYQAFVERLHQCPNVAKPLRYMSHFGCADEMNNEMTPKQIELFLSLTRGCKGERSLAASAGLLAWQESQLEWVRPGIIMYGVSPFGDKTASELGYKPVMTLKSHLIAVRDVKAGESVGYGATWISERDTKVGVIAIGYGDGYPRTAPNGTPVLVNGRKVPIAGRVSMDMLTVDLGPDATDHVGDEAILWGADLPAEDVAQHIGTIAYELVTKLTSRVEMSYSE.

Lys-48 acts as the Proton acceptor; specific for D-alanine in catalysis. Lys-48 bears the N6-(pyridoxal phosphate)lysine mark. Residue Arg-143 coordinates substrate. Tyr-268 serves as the catalytic Proton acceptor; specific for L-alanine. Substrate is bound at residue Met-316.

It belongs to the alanine racemase family. It depends on pyridoxal 5'-phosphate as a cofactor.

The enzyme catalyses L-alanine = D-alanine. It functions in the pathway amino-acid biosynthesis; D-alanine biosynthesis; D-alanine from L-alanine: step 1/1. Functionally, catalyzes the interconversion of L-alanine and D-alanine. May also act on other amino acids. This chain is Alanine racemase (alr), found in Vibrio vulnificus (strain YJ016).